Here is a 155-residue protein sequence, read N- to C-terminus: V-type proton ATPase 16 kDa proteolipid subunit c (155 aa).

The Lumenal segment spans residues 1 to 10; the sequence is MSEAKSGPEY. A helical transmembrane segment spans residues 11–33; the sequence is ASFFAVMGASAAMVFSALGAAYG. The Cytoplasmic portion of the chain corresponds to 34 to 55; it reads TAKSGTGIAAMSVMRPEMIMKS. Residues 56–76 form a helical membrane-spanning segment; it reads IIPVVMAGIIAIYGLVVAVLI. The Lumenal portion of the chain corresponds to 77 to 92; the sequence is ANSLNDGISLYRSFLQ. A helical membrane pass occupies residues 93–114; that stretch reads LGAGLSVGLSGLAAGFAIGIVG. Over 115-131 the chain is Cytoplasmic; it reads DAGVRGTAQQPRLFVGM. A helical membrane pass occupies residues 132-152; it reads ILILIFAEVLGLYGLIVALIL. Residues 153-155 are Lumenal-facing; sequence STK.

Belongs to the V-ATPase proteolipid subunit family. V-ATPase is a heteromultimeric enzyme made up of two complexes: the ATP-hydrolytic V1 complex and the proton translocation V0 complex. The V1 complex consists of three catalytic AB heterodimers that form a heterohexamer, three peripheral stalks each consisting of EG heterodimers, one central rotor including subunits D and F, and the regulatory subunits C and H. The proton translocation complex V0 consists of the proton transport subunit a, a ring of proteolipid subunits c9c'', rotary subunit d, subunits e and f, and the accessory subunits ATP6AP1/Ac45 and ATP6AP2/PRR. Interacts with the V0 complex V-ATPase subunit a4 ATP6V0A4. Interacts with LASS2. Interacts with RNF182; this interaction leads to ubiquitination and degradation via the proteasome pathway. In terms of processing, ubiquitinated by RNF182, leading to its degradation via the ubiquitin-proteasome pathway.

It localises to the cytoplasmic vesicle. The protein resides in the clathrin-coated vesicle membrane. Its subcellular location is the secretory vesicle. The protein localises to the synaptic vesicle membrane. In terms of biological role, proton-conducting pore forming subunit of the V0 complex of vacuolar(H+)-ATPase (V-ATPase), a multisubunit enzyme composed of a peripheral complex (V1) that hydrolyzes ATP and a membrane integral complex (V0) that translocates protons. V-ATPase is responsible for acidifying and maintaining the pH of intracellular compartments and in some cell types, is targeted to the plasma membrane, where it is responsible for acidifying the extracellular environment. This chain is V-type proton ATPase 16 kDa proteolipid subunit c (ATP6V0C), found in Ovis aries (Sheep).